A 286-amino-acid chain; its full sequence is MDKLKIALQYIMPKHLLSRLVGKLAAAELGAVTTSVIKWFIKQYKIDMSEAAQSAPEAYASFNQFFTRALKPGIRPLCDDDDYIVHPVDGAVSQCGPIKEGRIFQAKGHEYSSLALLGDQADDAKRFEGGDFATIYLAPKDYHRIHMPIKGTLSKMTYVPGELFSVNPLTAENVPGLFARNERVVAIFETEIGPMAMVLVGATIVASIETVWAGTVTPPTGKKVFTWDYPTEGPEAITLDKGEEMGRFKLGSTVVMLFAKDALEHFADGVEPKAVTRMGQAFAKID.

Catalysis depends on charge relay system; for autoendoproteolytic cleavage activity residues Asp-89, His-146, and Ser-252. Residue Ser-252 is the Schiff-base intermediate with substrate; via pyruvic acid; for decarboxylase activity of the active site. Ser-252 carries the post-translational modification Pyruvic acid (Ser); by autocatalysis.

Belongs to the phosphatidylserine decarboxylase family. PSD-B subfamily. Prokaryotic type I sub-subfamily. Heterodimer of a large membrane-associated beta subunit and a small pyruvoyl-containing alpha subunit. It depends on pyruvate as a cofactor. In terms of processing, is synthesized initially as an inactive proenzyme. Formation of the active enzyme involves a self-maturation process in which the active site pyruvoyl group is generated from an internal serine residue via an autocatalytic post-translational modification. Two non-identical subunits are generated from the proenzyme in this reaction, and the pyruvate is formed at the N-terminus of the alpha chain, which is derived from the carboxyl end of the proenzyme. The autoendoproteolytic cleavage occurs by a canonical serine protease mechanism, in which the side chain hydroxyl group of the serine supplies its oxygen atom to form the C-terminus of the beta chain, while the remainder of the serine residue undergoes an oxidative deamination to produce ammonia and the pyruvoyl prosthetic group on the alpha chain. During this reaction, the Ser that is part of the protease active site of the proenzyme becomes the pyruvoyl prosthetic group, which constitutes an essential element of the active site of the mature decarboxylase.

The protein localises to the cell membrane. It carries out the reaction a 1,2-diacyl-sn-glycero-3-phospho-L-serine + H(+) = a 1,2-diacyl-sn-glycero-3-phosphoethanolamine + CO2. It functions in the pathway phospholipid metabolism; phosphatidylethanolamine biosynthesis; phosphatidylethanolamine from CDP-diacylglycerol: step 2/2. In terms of biological role, catalyzes the formation of phosphatidylethanolamine (PtdEtn) from phosphatidylserine (PtdSer). The chain is Phosphatidylserine decarboxylase proenzyme from Shewanella loihica (strain ATCC BAA-1088 / PV-4).